The sequence spans 388 residues: Ribosomal RNA large subunit methyltransferase F (388 aa).

Residues 1–22 (MKTNNHNAKQAQTKTAKSNPSK) show a composition bias toward polar residues. The disordered stretch occupies residues 1 to 51 (MKTNNHNAKQAQTKTAKSNPSKEVTKIKPKRVKNKPTAKAAKSTGLKTNAA). The span at 27–36 (IKPKRVKNKP) shows a compositional bias: basic residues.

It belongs to the methyltransferase superfamily. METTL16/RlmF family.

It is found in the cytoplasm. It catalyses the reaction adenosine(1618) in 23S rRNA + S-adenosyl-L-methionine = N(6)-methyladenosine(1618) in 23S rRNA + S-adenosyl-L-homocysteine + H(+). Its function is as follows. Specifically methylates the adenine in position 1618 of 23S rRNA. The sequence is that of Ribosomal RNA large subunit methyltransferase F from Vibrio campbellii (strain ATCC BAA-1116).